Consider the following 267-residue polypeptide: Myxobacterial hemagglutinin (267 aa).

4 tandem repeats follow at residues 1–66, 67–133, 134–200, and 201–267. The 4 X 65 AA tandem repeats stretch occupies residues 1–267; the sequence is MAAYLVQNQW…GPIGFRARLG (267 aa).

The protein belongs to the bacterial lectin family.

Functionally, this lectin might have a role in the differentiation of cells. The sequence is that of Myxobacterial hemagglutinin (mbhA) from Myxococcus xanthus.